We begin with the raw amino-acid sequence, 209 residues long: SAGA-associated factor 11 homolog 1 (209 aa).

The segment at M1–K36 is disordered. The segment at C120 to C141 adopts an SGF11-type zinc-finger fold. Over residues L156–S166 the composition is skewed to low complexity. Positions L156–K209 are disordered. Over residues K193–K209 the composition is skewed to basic residues.

This sequence belongs to the SGF11 family. In terms of assembly, component of some SAGA transcription coactivator-HAT complexes, at least composed of Ada2b, not/nonstop, Pcaf/Gcn5, Sgf11 and Spt3. Within the SAGA complex, Sgf11, e(y)2, and not/nonstop form an additional subcomplex of SAGA called the DUB module (deubiquitination module). Interacts directly with not/nonstop. Interacts with the AMEX complex component xmas-2. Interacts with Cbp80; important for promoter recruitment of Sgf11 that is not associated with the DUB module.

Its subcellular location is the nucleus. It is found in the nucleoplasm. The protein localises to the cytoplasm. In terms of biological role, component of the transcription regulatory histone acetylation (HAT) complex SAGA, a multiprotein complex that activates transcription by remodeling chromatin and mediating histone acetylation and deubiquitination. Within the SAGA complex, participates in a subcomplex that specifically deubiquitinates histone H2B. The SAGA complex is recruited to specific gene promoters by activators, where it is required for transcription. Required for nuclear receptor-mediated transactivation. Binds independently on SAGA to promoters in an RNA-dependent manner. Binds to mRNA and is essential for total mRNA export from the nucleus. Required to counteract heterochromatin silencing. Controls the development of neuronal connectivity in visual system by being required for accurate axon targeting in the optic lobe. Required for expression of ecdysone-induced genes such as br/broad. The sequence is that of SAGA-associated factor 11 homolog 1 from Drosophila willistoni (Fruit fly).